The following is a 618-amino-acid chain: Glycine--tRNA ligase 2 (618 aa).

Glu187 contributes to the glycine binding site. ATP is bound by residues 219-221 and 230-231; these read RNE and RV. A glycine-binding site is contributed by Glu238. Position 347–348 (347–348) interacts with ATP; the sequence is EC. 466-468 serves as a coordination point for glycine; it reads EPS. Residue Arg473 coordinates ATP.

This sequence belongs to the class-II aminoacyl-tRNA synthetase family. Homodimer.

Its subcellular location is the cytoplasm. The catalysed reaction is tRNA(Gly) + glycine + ATP = glycyl-tRNA(Gly) + AMP + diphosphate. It catalyses the reaction 2 ATP + H(+) = P(1),P(4)-bis(5'-adenosyl) tetraphosphate + diphosphate. Its function is as follows. Catalyzes the ATP-dependent ligation of glycine to the 3'-end of its cognate tRNA, via the formation of an aminoacyl-adenylate intermediate (Gly-AMP). Also produces diadenosine tetraphosphate (Ap4A), a universal pleiotropic signaling molecule needed for cell regulation pathways, by direct condensation of 2 ATPs. Thereby, may play a special role in Ap4A homeostasis. The chain is Glycine--tRNA ligase 2 (GRS2) from Saccharomyces cerevisiae (strain ATCC 204508 / S288c) (Baker's yeast).